Consider the following 159-residue polypeptide: Eukaryotic translation initiation factor 5A-5 (159 aa).

The span at 1 to 12 shows a compositional bias: basic and acidic residues; sequence MSDEEHHFESKA. Positions 1-23 are disordered; sequence MSDEEHHFESKADAGASKTYPQQ. At Lys-52 the chain carries Hypusine.

Belongs to the eIF-5A family. Post-translationally, lys-52 undergoes hypusination, a unique post-translational modification that consists in the addition of a butylamino group from spermidine to lysine side chain, leading to the formation of the unusual amino acid hypusine. eIF-5As are the only known proteins to undergo this modification, which is essential for their function.

In terms of biological role, translation factor that promotes translation elongation and termination, particularly upon ribosome stalling at specific amino acid sequence contexts. Binds between the exit (E) and peptidyl (P) site of the ribosome and promotes rescue of stalled ribosome: specifically required for efficient translation of polyproline-containing peptides as well as other motifs that stall the ribosome. Acts as a ribosome quality control (RQC) cofactor by joining the RQC complex to facilitate peptidyl transfer during CAT tailing step. The protein is Eukaryotic translation initiation factor 5A-5 (EIF5A5) of Solanum tuberosum (Potato).